Reading from the N-terminus, the 1125-residue chain is Speract receptor (1125 aa).

The first 21 residues, 1–21 (MAHARHLFLFMVAFTITMVIA), serve as a signal peptide directing secretion. The Extracellular portion of the chain corresponds to 22 to 510 (RLDFNPTIIN…GELCTNWALY (489 aa)). N-linked (GlcNAc...) asparagine glycosylation is found at asparagine 185 and asparagine 409. Residues 511-531 (LGASIPTFLIIFGGLIGFFIY) traverse the membrane as a helical segment. Residues 532 to 1125 (RKRAYEAALD…AANRVIPDDV (594 aa)) lie on the Cytoplasmic side of the membrane. The 269-residue stretch at 571–839 (MSAISVISNA…PNIMAVRTML (269 aa)) folds into the Protein kinase domain. The region spanning 914-1044 (SIFFSDIVGF…DTVNTASRME (131 aa)) is the Guanylate cyclase domain.

The protein belongs to the adenylyl cyclase class-4/guanylyl cyclase family.

The protein resides in the membrane. It catalyses the reaction GTP = 3',5'-cyclic GMP + diphosphate. Functionally, implicated as a cell-surface receptor on spermatozoa for 'speract' a chemotactic peptide, and on various other cells as a receptor for atrial natriuretic peptide. This Strongylocentrotus purpuratus (Purple sea urchin) protein is Speract receptor.